Consider the following 566-residue polypeptide: Protein kintoun (566 aa).

Disordered regions lie at residues 183-298 (KYKG…TAPQ), 399-467 (EEEE…AETG), and 493-552 (QLEE…ESRI). Residues 208–290 (PQQTTGPQQP…HQPTDPQQTT (83 aa)) show a composition bias toward low complexity. Residues 399–424 (EEEERRAEEEESRKGGDEDGELHPDC) show a composition bias toward basic and acidic residues. A compositionally biased stretch (low complexity) spans 440-467 (TPAADTHTPAADTHTPAADTHTPAAETG). A compositionally biased stretch (basic and acidic residues) spans 535–550 (DPAHTDPAHTDPEMES).

This sequence belongs to the PIH1 family. Kintoun subfamily.

It is found in the cytoplasm. Its subcellular location is the dynein axonemal particle. Functionally, required for cytoplasmic pre-assembly of axonemal dyneins, thereby playing a central role in motility in cilia and flagella. Involved in pre-assembly of dynein arm complexes in the cytoplasm before intraflagellar transport loads them for the ciliary compartment. The polypeptide is Protein kintoun (Danio rerio (Zebrafish)).